The primary structure comprises 731 residues: Fatty acid oxidation complex subunit alpha (731 aa).

The interval 15–204 (TEKTSAFSLT…RQGLVDEAVP (190 aa)) is enoyl-CoA hydratase. The 3-hydroxyacyl-CoA dehydrogenase stretch occupies residues 320–729 (KPIHRVGILG…FYPPADKDNS (410 aa)).

In the N-terminal section; belongs to the enoyl-CoA hydratase/isomerase family. It in the central section; belongs to the 3-hydroxyacyl-CoA dehydrogenase family. In terms of assembly, heterotetramer of two alpha chains (FadJ) and two beta chains (FadI).

The protein resides in the cytoplasm. It carries out the reaction a (3S)-3-hydroxyacyl-CoA = a (2E)-enoyl-CoA + H2O. The catalysed reaction is a 4-saturated-(3S)-3-hydroxyacyl-CoA = a (3E)-enoyl-CoA + H2O. It catalyses the reaction a (3S)-3-hydroxyacyl-CoA + NAD(+) = a 3-oxoacyl-CoA + NADH + H(+). The enzyme catalyses (3S)-3-hydroxybutanoyl-CoA = (3R)-3-hydroxybutanoyl-CoA. It participates in lipid metabolism; fatty acid beta-oxidation. Functionally, catalyzes the formation of a hydroxyacyl-CoA by addition of water on enoyl-CoA. Also exhibits 3-hydroxyacyl-CoA epimerase and 3-hydroxyacyl-CoA dehydrogenase activities. The protein is Fatty acid oxidation complex subunit alpha of Pectobacterium atrosepticum (strain SCRI 1043 / ATCC BAA-672) (Erwinia carotovora subsp. atroseptica).